A 378-amino-acid polypeptide reads, in one-letter code: Anhydro-N-acetylmuramic acid kinase 2 (378 aa).

14-22 (GTVLDGNID) lines the ATP pocket.

Belongs to the anhydro-N-acetylmuramic acid kinase family.

It carries out the reaction 1,6-anhydro-N-acetyl-beta-muramate + ATP + H2O = N-acetyl-D-muramate 6-phosphate + ADP + H(+). The protein operates within amino-sugar metabolism; 1,6-anhydro-N-acetylmuramate degradation. It participates in cell wall biogenesis; peptidoglycan recycling. Functionally, catalyzes the specific phosphorylation of 1,6-anhydro-N-acetylmuramic acid (anhMurNAc) with the simultaneous cleavage of the 1,6-anhydro ring, generating MurNAc-6-P. Is required for the utilization of anhMurNAc either imported from the medium or derived from its own cell wall murein, and thus plays a role in cell wall recycling. The sequence is that of Anhydro-N-acetylmuramic acid kinase 2 from Jannaschia sp. (strain CCS1).